Reading from the N-terminus, the 247-residue chain is PABIR family member 2 (247 aa).

The interval 1–23 is disordered; it reads MAQEKMELDLEPDTSYGGTLRRS. Alanine 2 bears the N-acetylalanine mark. 5 positions are modified to phosphoserine: serine 25, serine 33, serine 50, serine 58, and leucine 63. The segment at 82–104 is disordered; it reads ISQSWDESLSLSDSDFDKPEKLY. Low complexity predominate over residues 83–94; sequence SQSWDESLSLSD. At threonine 112 the chain carries Phosphothreonine. Residues serine 115 and serine 119 each carry the phosphoserine modification. Arginine 122 is modified (omega-N-methylarginine). Disordered stretches follow at residues 129 to 152, 158 to 177, and 202 to 230; these read VSSSGLPPSPVPSPRRFSRRSQSP, PSVLGPLKRKGEMETESQPK, and DILDGSSSSSGLSSDPLAKGSATAESPVA. Phosphoserine occurs at positions 137 and 141. Over residues 166–176 the composition is skewed to basic and acidic residues; it reads RKGEMETESQP. A compositionally biased stretch (low complexity) spans 202-216; it reads DILDGSSSSSGLSSD.

The protein belongs to the FAM122 family. In terms of processing, isoform 3 and isoform 4 are phosphorylated on Ser-62 and Ser-64.

The protein is PABIR family member 2 of Homo sapiens (Human).